We begin with the raw amino-acid sequence, 426 residues long: Glutamyl-tRNA reductase (426 aa).

Substrate-binding positions include 49-52 (TCNR), serine 109, 114-116 (EGQ), and glutamine 120. The active-site Nucleophile is the cysteine 50. Residue 189–194 (GAGKMS) participates in NADP(+) binding.

It belongs to the glutamyl-tRNA reductase family. Homodimer.

It catalyses the reaction (S)-4-amino-5-oxopentanoate + tRNA(Glu) + NADP(+) = L-glutamyl-tRNA(Glu) + NADPH + H(+). It functions in the pathway porphyrin-containing compound metabolism; protoporphyrin-IX biosynthesis; 5-aminolevulinate from L-glutamyl-tRNA(Glu): step 1/2. It participates in porphyrin-containing compound metabolism; chlorophyll biosynthesis. In terms of biological role, catalyzes the NADPH-dependent reduction of glutamyl-tRNA(Glu) to glutamate 1-semialdehyde (GSA). The sequence is that of Glutamyl-tRNA reductase from Thermosynechococcus vestitus (strain NIES-2133 / IAM M-273 / BP-1).